A 602-amino-acid polypeptide reads, in one-letter code: Protein indeterminate-domain 5, chloroplastic (602 aa).

Composition is skewed to low complexity over residues 1 to 10 (MAASSSSAAS) and 21 to 30 (HLLPPNSSAA). Residues 1-50 (MAASSSSAASFFGVRQDDQSHLLPPNSSAAAPPPPPPHHQAPLPPLEAPP) constitute a chloroplast transit peptide. Residues 1–65 (MAASSSSAAS…NQPRTPNSDA (65 aa)) form a disordered region. Pro residues predominate over residues 31–48 (APPPPPPHHQAPLPPLEA). Threonine 60 bears the Phosphothreonine mark. Position 71 is a phosphoserine (serine 71). C2H2-type zinc fingers lie at residues 81-103 (FICE…RRGH) and 122-152 (YLCP…YRKH). The C2H2-type 2; degenerate zinc-finger motif lies at 157 to 180 (WKCDKCSKRYAVQSDWKAHSKTCG). Positions 159, 162, 175, 179, 186, 188, 201, and 205 each coordinate Zn(2+). The segment at 184–207 (YRCDCGTLFSRRDSFITHRAFCDA) adopts a CCHC-type 2; atypical zinc-finger fold. The segment at 194 to 206 (RRDSFITHRAFCD) is SHR-binding. Disordered stretches follow at residues 443-467 (KAAQ…NNAS) and 537-602 (KSMS…HASF). Low complexity-rich tracts occupy residues 448 to 467 (GSTS…NNAS), 546 to 560 (QQQQ…QQQQ), and 570 to 579 (SSSDSADRSS).

In terms of assembly, binds to RGA and SCL3 competitively. Highly expressed in leaf tissues.

Its subcellular location is the plastid. It localises to the chloroplast. In terms of biological role, transcription factor acting as a positive regulator of the starch synthase SS4. Controls chloroplast development and starch granule formation. Binds DNA via its zinc fingers. Recognizes and binds to SCL3 promoter sequence 5'-AGACAA-3' to promote its expression when in complex with RGA. This is Protein indeterminate-domain 5, chloroplastic from Arabidopsis thaliana (Mouse-ear cress).